A 597-amino-acid chain; its full sequence is Elongation factor 4 (597 aa).

Residues 2–184 (DHIRNFSIIA…ALVAKVPPPK (183 aa)) form the tr-type G domain. GTP-binding positions include 14-19 (DHGKST) and 131-134 (NKID).

This sequence belongs to the TRAFAC class translation factor GTPase superfamily. Classic translation factor GTPase family. LepA subfamily.

It is found in the cell inner membrane. It carries out the reaction GTP + H2O = GDP + phosphate + H(+). Required for accurate and efficient protein synthesis under certain stress conditions. May act as a fidelity factor of the translation reaction, by catalyzing a one-codon backward translocation of tRNAs on improperly translocated ribosomes. Back-translocation proceeds from a post-translocation (POST) complex to a pre-translocation (PRE) complex, thus giving elongation factor G a second chance to translocate the tRNAs correctly. Binds to ribosomes in a GTP-dependent manner. The chain is Elongation factor 4 from Paraburkholderia phytofirmans (strain DSM 17436 / LMG 22146 / PsJN) (Burkholderia phytofirmans).